Reading from the N-terminus, the 451-residue chain is Probable beta-1,4-xylosyltransferase GT43E (451 aa).

Topologically, residues 1-88 are cytoplasmic; the sequence is MVSSRRNTGG…SKSRGLSCKR (88 aa). The helical; Signal-anchor for type II membrane protein transmembrane segment at 89–109 threads the bilayer; sequence LAFHLFVCFMVGIFIGFMPFF. At 110–451 the chain is on the lumenal side; sequence SVDVSQKIVS…KNLDAVIPVT (342 aa). N-linked (GlcNAc...) asparagine glycosylation is found at Asn-260 and Asn-366.

It belongs to the glycosyltransferase 43 family.

It is found in the golgi apparatus membrane. Probable beta-1,4-xylosyltransferase involved in xylan biosynthesis in cell walls. This Oryza sativa subsp. japonica (Rice) protein is Probable beta-1,4-xylosyltransferase GT43E.